Here is a 200-residue protein sequence, read N- to C-terminus: Protein GrpE (200 aa).

Positions 1–25 are enriched in basic and acidic residues; that stretch reads MMSKQNKKDWKKFKDEHKEEHKVEN. The interval 1 to 52 is disordered; the sequence is MMSKQNKKDWKKFKDEHKEEHKVENEILEEETDEESQHQEPALGHPSYTALE.

This sequence belongs to the GrpE family. As to quaternary structure, homodimer.

It localises to the cytoplasm. Functionally, participates actively in the response to hyperosmotic and heat shock by preventing the aggregation of stress-denatured proteins, in association with DnaK and GrpE. It is the nucleotide exchange factor for DnaK and may function as a thermosensor. Unfolded proteins bind initially to DnaJ; upon interaction with the DnaJ-bound protein, DnaK hydrolyzes its bound ATP, resulting in the formation of a stable complex. GrpE releases ADP from DnaK; ATP binding to DnaK triggers the release of the substrate protein, thus completing the reaction cycle. Several rounds of ATP-dependent interactions between DnaJ, DnaK and GrpE are required for fully efficient folding. The polypeptide is Protein GrpE (Legionella pneumophila subsp. pneumophila (strain Philadelphia 1 / ATCC 33152 / DSM 7513)).